The chain runs to 257 residues: 3-methyl-2-oxobutanoate hydroxymethyltransferase (257 aa).

Positions 42 and 81 each coordinate Mg(2+). Residues 42–43 (DS), aspartate 81, and lysine 110 each bind 3-methyl-2-oxobutanoate. Residue glutamate 112 coordinates Mg(2+). Catalysis depends on glutamate 176, which acts as the Proton acceptor.

It belongs to the PanB family. Homodecamer; pentamer of dimers. The cofactor is Mg(2+).

The protein resides in the cytoplasm. It catalyses the reaction 3-methyl-2-oxobutanoate + (6R)-5,10-methylene-5,6,7,8-tetrahydrofolate + H2O = 2-dehydropantoate + (6S)-5,6,7,8-tetrahydrofolate. It functions in the pathway cofactor biosynthesis; (R)-pantothenate biosynthesis; (R)-pantoate from 3-methyl-2-oxobutanoate: step 1/2. Its function is as follows. Catalyzes the reversible reaction in which hydroxymethyl group from 5,10-methylenetetrahydrofolate is transferred onto alpha-ketoisovalerate to form ketopantoate. This is 3-methyl-2-oxobutanoate hydroxymethyltransferase from Pelagibacter ubique (strain HTCC1062).